The chain runs to 438 residues: Ribosome biogenesis protein NOP53 (438 aa).

Disordered stretches follow at residues methionine 1–glycine 23 and histidine 247–glutamate 346. The span at glycine 12 to arginine 21 shows a compositional bias: basic residues. Basic and acidic residues-rich tracts occupy residues lysine 265–glutamate 288, glutamine 297–asparagine 318, and leucine 325–glutamate 346.

It belongs to the NOP53 family.

Its subcellular location is the nucleus. The protein resides in the nucleolus. The protein localises to the nucleoplasm. May play a role in ribosome biogenesis, being required for integration of the 5S RNP into the ribosomal large subunit. The chain is Ribosome biogenesis protein NOP53 from Caenorhabditis elegans.